We begin with the raw amino-acid sequence, 89 residues long: Small ribosomal subunit protein uS17 (89 aa).

It belongs to the universal ribosomal protein uS17 family. As to quaternary structure, part of the 30S ribosomal subunit.

Functionally, one of the primary rRNA binding proteins, it binds specifically to the 5'-end of 16S ribosomal RNA. The chain is Small ribosomal subunit protein uS17 from Bdellovibrio bacteriovorus (strain ATCC 15356 / DSM 50701 / NCIMB 9529 / HD100).